Reading from the N-terminus, the 480-residue chain is ATP-grasp enzyme ankG (480 aa).

Positions methionine 1–arginine 30 are disordered. A compositionally biased stretch (basic and acidic residues) spans alanine 21–arginine 30.

It catalyses the reaction NK13650 D + L-aspartate + ATP = NK13650 C + AMP + diphosphate + H(+). The enzyme catalyses NK13650 B + L-aspartate + ATP = NK13650 A + AMP + diphosphate + H(+). The protein operates within secondary metabolite biosynthesis. Functionally, ATP-grasp enzyme; part of the ank cluster that mediates the biosynthesis of NK13650 C, a highly modified cyclo-arginine-tyrosine dipeptide. AnkG catalyzes the last step of the pathway via amidation NK13650 D with L-Asp to produce NK13650 C. AnkG also amidates NK13650 B into NK13650 A. Within the pathway, the cyclodipeptide synthase ankA acts as the scaffold-generating enzyme and is responsible for formation of the cyclo-Arg-Tyr diketopiperazine (cRY) from L-Arg and L-Tyr. The ankA product cRY is desaturated by the cytochrome P450 monooxygenase ankB to yield a dehydro-cyclodipeptide intermediate. The FAD-dependent monooxygenase ankC then installs the m-OH, ankD catalyzes the attachment of L-homoserine, and ankE ligates citrate to the ankD product to yield NK13650 B. The O-methyltransferase ankF is responsible for methylation of the C-17 phenol group of NK13650 B to produce NK13650 D. Amidation of NK13650 D with L-Asp by ankG then leads to the production of NK13650 C, whereas amidation of NK13650 B produces NK13650 A. The chain is ATP-grasp enzyme ankG from Aspergillus thermomutatus (Neosartorya pseudofischeri).